The primary structure comprises 3461 residues: Abnormal spindle-like microcephaly-associated protein homolog (3461 aa).

The interval 1-30 (MATRRAGRSWEVSPTERRPSARPRNSAAEE) is disordered. Phosphoserine is present on residues S279, S282, S367, S392, S426, and S606. The Calponin-homology (CH) 1 domain occupies 921–1057 (KTSKEILLAF…LLWKIAFAFQ (137 aa)). The stretch at 1058 to 1077 (VDISLNLDQLKEEIDFLKHT) forms a coiled coil. Position 1104 is a phosphoserine (S1104). The Calponin-homology (CH) 2 domain maps to 1111–1262 (SESIKLLMDW…YLSFLCARLL (152 aa)). IQ domains follow at residues 1267–1296 (ETRA…RDKA), 1348–1379 (QNKS…VILQ), 1488–1517 (LRSC…AILT), 1511–1540 (RREA…QKRA), 1538–1569 (KRAA…VFQS), 1583–1614 (LKKI…LIIQ), 1633–1662 (TRSA…SIIK), 1656–1685 (ILTS…ATVK), 1729–1758 (MRES…AAVS), 1752–1783 (QRKA…VVIQ), 1775–1804 (MYKA…QVKR), 1802–1831 (VKRA…AALK), 1825–1854 (QSIA…STIK), 1875–1904 (TKAA…AAVR), 1898–1929 (ELQA…LVIQ), 1948–1979 (LRNA…VIIQ), 1971–2002 (QHKC…RLIQ), 2021–2050 (TKAA…AAVA), 2044–2075 (YNKA…VLIQ), 2094–2125 (LKKT…TFIK), 2117–2148 (MHTA…VLIQ), 2167–2198 (ILKA…IRIQ), 2190–2219 (MQNA…VTQT), 2240–2271 (LRHS…TLIQ), 2313–2344 (LQKA…TVIQ), 2336–2367 (MHRA…VVIQ), 2386–2417 (QRHS…VLIQ), 2409–2440 (MHSS…VFVQ), 2459–2490 (VQKA…ALIQ), 2532–2563 (QRHS…IIIQ), 2666–2697 (RTQA…TLIQ), 2689–2720 (MHLA…VLIQ), 2739–2768 (LQKS…AKMA), 2837–2866 (QKHA…AAVT), 2860–2891 (QKRA…SVLQ), 2910–2939 (VRSS…STIK), 2933–2964 (IKDS…KIQA), 2955–2986 (KVKA…KVIQ), 3030–3059 (RHQA…AALT), 3080–3111 (LKKS…RLLH), 3182–3211 (QNRA…GITK), and 3205–3236 (INNG…IRLS).

The protein localises to the cytoplasm. It localises to the cytoskeleton. It is found in the spindle. The protein resides in the nucleus. Its function is as follows. Probable role in mitotic spindle regulation and coordination of mitotic processes. May have a preferential role in regulating neurogenesis. This is Abnormal spindle-like microcephaly-associated protein homolog (ASPM) from Felis catus (Cat).